Here is a 171-residue protein sequence, read N- to C-terminus: MYHLFHSRLCLPQGLRSLLAQRMPAAKLLPNDSAVAAYARHRRVVAVGDRVSETLIRHGVKPWVMVFDCVEARRDKTCPSIPEGYAILRTRNERSTVEPGAVEVIRKALRQGHTVVRVDGEEDLLALPALLYGDVGSVVLYGLPGKGVVAAAVNREAKLLAMRVLEFFEPC.

Residues D49, V51, D68, and E122 each coordinate GTP.

The protein belongs to the GTP-dependent DPCK family.

The enzyme catalyses 3'-dephospho-CoA + GTP = GDP + CoA + H(+). It functions in the pathway cofactor biosynthesis; coenzyme A biosynthesis. In terms of biological role, catalyzes the GTP-dependent phosphorylation of the 3'-hydroxyl group of dephosphocoenzyme A to form coenzyme A (CoA). This chain is GTP-dependent dephospho-CoA kinase, found in Hyperthermus butylicus (strain DSM 5456 / JCM 9403 / PLM1-5).